The primary structure comprises 349 residues: Peroxidase 22 (349 aa).

A signal peptide spans 1–29 (MGFSPSFSCSAIGALILGCLLLQASNSNA). Position 30 is a pyrrolidone carboxylic acid (Gln-30). 4 disulfide bridges follow: Cys-40–Cys-120, Cys-73–Cys-78, Cys-126–Cys-329, and Cys-206–Cys-238. Catalysis depends on His-71, which acts as the Proton acceptor. 5 residues coordinate Ca(2+): Asp-72, Val-75, Gly-77, Asp-79, and Ser-81. The N-linked (GlcNAc...) asparagine glycan is linked to Asn-86. Pro-168 contributes to the substrate binding site. Residues Asn-173 and Asn-187 are each glycosylated (N-linked (GlcNAc...) asparagine). Residue His-199 coordinates heme b. Thr-200 is a Ca(2+) binding site. 2 N-linked (GlcNAc...) asparagine glycosylation sites follow: Asn-217 and Asn-243. Ca(2+) contacts are provided by Asp-251, Thr-254, and Asp-259.

The protein belongs to the peroxidase family. Classical plant (class III) peroxidase subfamily. Heme b serves as cofactor. Ca(2+) is required as a cofactor. Mainly expressed in roots.

Its subcellular location is the secreted. The protein resides in the vacuole. The enzyme catalyses 2 a phenolic donor + H2O2 = 2 a phenolic radical donor + 2 H2O. Its function is as follows. Removal of H(2)O(2), oxidation of toxic reductants, biosynthesis and degradation of lignin, suberization, auxin catabolism, response to environmental stresses such as wounding, pathogen attack and oxidative stress. These functions might be dependent on each isozyme/isoform in each plant tissue. The chain is Peroxidase 22 (PER22) from Arabidopsis thaliana (Mouse-ear cress).